The sequence spans 441 residues: Tryptophan aminotransferase-related protein 1 (441 aa).

Residues tyrosine 110, 152 to 153, asparagine 219, 239 to 242, 262 to 265, and arginine 273 each bind pyridoxal 5'-phosphate; these read ST, DLAY, and TVSK. Lysine 265 carries the post-translational modification N6-(pyridoxal phosphate)lysine.

The protein belongs to the alliinase family. Requires pyridoxal 5'-phosphate as cofactor. Highly expressed in anthers. Expressed at low levels in ovaries.

The enzyme catalyses L-tryptophan + 2-oxoglutarate = indole-3-pyruvate + L-glutamate. It participates in plant hormone metabolism; auxin biosynthesis. Its function is as follows. Probable tryptophan aminotransferase that may be involved in the regulation of auxin production in developing rice grains. This Oryza sativa subsp. japonica (Rice) protein is Tryptophan aminotransferase-related protein 1.